Reading from the N-terminus, the 354-residue chain is Serum paraoxonase/arylesterase 2 (354 aa).

Residue N29 is glycosylated (N-linked (GlcNAc...) asparagine). C42 and C352 form a disulfide bridge. E53 and D54 together coordinate Ca(2+). Catalysis depends on H114, which acts as the Proton acceptor. Ca(2+) contacts are provided by I116, N167, D168, and N223. N254 carries an N-linked (GlcNAc...) asparagine glycan. D268 and N269 together coordinate Ca(2+). N-linked (GlcNAc...) asparagine glycosylation is found at N269 and N323.

The protein belongs to the paraoxonase family. Ca(2+) serves as cofactor. In terms of processing, glycosylated. Post-translationally, the signal sequence is not cleaved.

It is found in the membrane. The catalysed reaction is a phenyl acetate + H2O = a phenol + acetate + H(+). It catalyses the reaction An aryl dialkyl phosphate + H2O = dialkyl phosphate + an aryl alcohol.. The absence of paraoxonase activity in turkey and chicken blood and in turkey liver indicates that PON2, if expressed, does not hydrolyze paraoxon. This is Serum paraoxonase/arylesterase 2 (PON2) from Gallus gallus (Chicken).